We begin with the raw amino-acid sequence, 175 residues long: Acireductone dioxygenase (175 aa).

Residues histidine 81, histidine 83, glutamate 87, and histidine 126 each contribute to the Fe(2+) site. Ni(2+) is bound by residues histidine 81, histidine 83, glutamate 87, and histidine 126.

The protein belongs to the acireductone dioxygenase (ARD) family. The cofactor is Fe(2+). Requires Ni(2+) as cofactor.

The protein resides in the cytoplasm. Its subcellular location is the nucleus. The enzyme catalyses 1,2-dihydroxy-5-(methylsulfanyl)pent-1-en-3-one + O2 = 4-methylsulfanyl-2-oxobutanoate + formate + 2 H(+). It carries out the reaction 1,2-dihydroxy-5-(methylsulfanyl)pent-1-en-3-one + O2 = 3-(methylsulfanyl)propanoate + CO + formate + 2 H(+). Its pathway is amino-acid biosynthesis; L-methionine biosynthesis via salvage pathway; L-methionine from S-methyl-5-thio-alpha-D-ribose 1-phosphate: step 5/6. In terms of biological role, catalyzes 2 different reactions between oxygen and the acireductone 1,2-dihydroxy-3-keto-5-methylthiopentene (DHK-MTPene) depending upon the metal bound in the active site. Fe-containing acireductone dioxygenase (Fe-ARD) produces formate and 2-keto-4-methylthiobutyrate (KMTB), the alpha-ketoacid precursor of methionine in the methionine recycle pathway. Ni-containing acireductone dioxygenase (Ni-ARD) produces methylthiopropionate, carbon monoxide and formate, and does not lie on the methionine recycle pathway. This chain is Acireductone dioxygenase, found in Phaeosphaeria nodorum (strain SN15 / ATCC MYA-4574 / FGSC 10173) (Glume blotch fungus).